The sequence spans 116 residues: Small ribosomal subunit protein bS16 (116 aa).

It belongs to the bacterial ribosomal protein bS16 family.

This is Small ribosomal subunit protein bS16 from Chlamydia muridarum (strain MoPn / Nigg).